The sequence spans 504 residues: WD repeat-containing protein 55 homolog (504 aa).

Residues 32-49 (QEVVNESDSEIGEYDLGD) show a composition bias toward acidic residues. Residues 32 to 135 (QEVVNESDSE…NAFDMDEDDE (104 aa)) are disordered. Residues 66–76 (DSISSDGSFNP) show a composition bias toward polar residues. Residues 77–95 (NDEDSDTDSDDSMLDEPDE) are compositionally biased toward acidic residues. Residues 114-124 (SGSSNRNQDSD) show a composition bias toward polar residues. WD repeat units lie at residues 158–197 (KLED…NKLL), 202–241 (VHAK…LKKL), 245–283 (AHDD…SIFE), 286–325 (EIED…LYVQ), 328–367 (PYEE…YHCD), and 412–451 (QHNM…DFGD). The interval 484-504 (AKEDNNDNENDDATAGPSNTT) is disordered.

The protein belongs to the WD repeat WDR55 family.

The protein is WD repeat-containing protein 55 homolog of Drosophila willistoni (Fruit fly).